We begin with the raw amino-acid sequence, 214 residues long: ATP-dependent Clp protease proteolytic subunit 2 (214 aa).

Catalysis depends on Ser-110, which acts as the Nucleophile. Residue His-135 is part of the active site.

This sequence belongs to the peptidase S14 family. As to quaternary structure, fourteen ClpP subunits assemble into 2 heptameric rings which stack back to back to give a disk-like structure with a central cavity, resembling the structure of eukaryotic proteasomes.

The protein localises to the cytoplasm. It carries out the reaction Hydrolysis of proteins to small peptides in the presence of ATP and magnesium. alpha-casein is the usual test substrate. In the absence of ATP, only oligopeptides shorter than five residues are hydrolyzed (such as succinyl-Leu-Tyr-|-NHMec, and Leu-Tyr-Leu-|-Tyr-Trp, in which cleavage of the -Tyr-|-Leu- and -Tyr-|-Trp bonds also occurs).. In terms of biological role, cleaves peptides in various proteins in a process that requires ATP hydrolysis. Has a chymotrypsin-like activity. Plays a major role in the degradation of misfolded proteins. The polypeptide is ATP-dependent Clp protease proteolytic subunit 2 (Mycobacterium bovis (strain ATCC BAA-935 / AF2122/97)).